Here is a 157-residue protein sequence, read N- to C-terminus: SsrA-binding protein (157 aa).

A disordered region spans residues 132-157 (EHDKRDTIKEREGKREVERAMKSRHR).

The protein belongs to the SmpB family.

Its subcellular location is the cytoplasm. Required for rescue of stalled ribosomes mediated by trans-translation. Binds to transfer-messenger RNA (tmRNA), required for stable association of tmRNA with ribosomes. tmRNA and SmpB together mimic tRNA shape, replacing the anticodon stem-loop with SmpB. tmRNA is encoded by the ssrA gene; the 2 termini fold to resemble tRNA(Ala) and it encodes a 'tag peptide', a short internal open reading frame. During trans-translation Ala-aminoacylated tmRNA acts like a tRNA, entering the A-site of stalled ribosomes, displacing the stalled mRNA. The ribosome then switches to translate the ORF on the tmRNA; the nascent peptide is terminated with the 'tag peptide' encoded by the tmRNA and targeted for degradation. The ribosome is freed to recommence translation, which seems to be the essential function of trans-translation. The sequence is that of SsrA-binding protein from Paracidovorax citrulli (strain AAC00-1) (Acidovorax citrulli).